The primary structure comprises 459 residues: MKRLLALLATGVSIVGLTALAGPPAQAATGCKAEYTITSQWEGGFQAGVKITNLGDPVSGWTLGFTMPDAGQRLVQGWNATWSQSGSAVTAGGVDWNRTLATGASADLGFVGSFTGANPAPTSFTLNGATCSGSVTDPPTDPPTDPPATGTPAAVNGQLHVCGVHLCNQYDRPIQLRGMSTHGIQWFGPCYGDASLDRLAQDWKSDLLRVAMYVQEDGYETDPAGFTSRVNGLVDMAEDRGMYAVIDFHTLTPGDPNYNLDRARTFFSSVAARNDKKNVIYEIANEPNGVSWTAVKSYAEQVIPVIRAADPDAVVIVGTRGWSSLGVSDGANESEVVNNPVNATNIMYAFHFYAASHKDDYRAAVRPAATRLPLFVSEFGTVSATAWSVDRSSSVAWLDLLDQLKISYANWTYSDADEGSAAFRPGTCEGTDYSSSGVLTESGALVKSRISTTDDFPTS.

Positions 1–27 (MKRLLALLATGVSIVGLTALAGPPAQA) are cleaved as a signal peptide. One can recognise a CBM2 domain in the interval 28–134 (ATGCKAEYTI…TLNGATCSGS (107 aa)). The cysteines at positions 31 and 131 are disulfide-linked. Positions 129-151 (ATCSGSVTDPPTDPPTDPPATGT) are disordered. The segment at 136 to 147 (TDPPTDPPTDPP) is linker ('hinge') (Pro-Thr box). A catalytic region spans residues 148–357 (ATGTPAAVNG…YAFHFYAASH (210 aa)). The active-site Proton donor is glutamate 286. The active-site Nucleophile is glutamate 378.

This sequence belongs to the glycosyl hydrolase 5 (cellulase A) family. The linker region (also termed 'hinge') may be a potential site for proteolysis.

The enzyme catalyses Endohydrolysis of (1-&gt;4)-beta-D-glucosidic linkages in cellulose, lichenin and cereal beta-D-glucans.. This Streptomyces lividans protein is Endoglucanase CelA (celA).